Consider the following 90-residue polypeptide: Secretory calcium-binding phosphoprotein proline-glutamine-rich 1 (90 aa).

Positions 1–15 (MQLFLLAALLSAAAA) are cleaved as a signal peptide.

As to expression, expressed in enamel organ.

The protein localises to the secreted. In terms of biological role, tooth-associated epithelia protein that may participate in structuring the basal lamina at cell-tooth interface. The protein is Secretory calcium-binding phosphoprotein proline-glutamine-rich 1 of Mus musculus (Mouse).